A 122-amino-acid polypeptide reads, in one-letter code: Small ribosomal subunit protein uS13 (122 aa).

The disordered stretch occupies residues 95 to 122 (SLPCRGQRTSTNARTRKGPKRAAVKKKK). Residues 108–122 (RTRKGPKRAAVKKKK) are compositionally biased toward basic residues.

This sequence belongs to the universal ribosomal protein uS13 family. Part of the 30S ribosomal subunit. Forms a loose heterodimer with protein S19. Forms two bridges to the 50S subunit in the 70S ribosome.

In terms of biological role, located at the top of the head of the 30S subunit, it contacts several helices of the 16S rRNA. In the 70S ribosome it contacts the 23S rRNA (bridge B1a) and protein L5 of the 50S subunit (bridge B1b), connecting the 2 subunits; these bridges are implicated in subunit movement. Contacts the tRNAs in the A and P-sites. The chain is Small ribosomal subunit protein uS13 from Desulforapulum autotrophicum (strain ATCC 43914 / DSM 3382 / VKM B-1955 / HRM2) (Desulfobacterium autotrophicum).